Here is a 119-residue protein sequence, read N- to C-terminus: Small ribosomal subunit protein bS16 (119 aa).

The protein belongs to the bacterial ribosomal protein bS16 family.

In Amoebophilus asiaticus (strain 5a2), this protein is Small ribosomal subunit protein bS16.